The sequence spans 498 residues: Glycerol kinase (498 aa).

Thr-11 contacts ADP. ATP is bound by residues Thr-11, Ser-12, and Ser-13. A sn-glycerol 3-phosphate-binding site is contributed by Thr-11. Arg-15 contacts ADP. The sn-glycerol 3-phosphate site is built by Arg-81, Glu-82, Tyr-133, and Asp-242. 5 residues coordinate glycerol: Arg-81, Glu-82, Tyr-133, Asp-242, and Gln-243. ADP is bound by residues Thr-264 and Gly-307. Residues Thr-264, Gly-307, Gln-311, and Gly-412 each contribute to the ATP site. 2 residues coordinate ADP: Gly-412 and Asn-416.

Belongs to the FGGY kinase family.

It catalyses the reaction glycerol + ATP = sn-glycerol 3-phosphate + ADP + H(+). Its pathway is polyol metabolism; glycerol degradation via glycerol kinase pathway; sn-glycerol 3-phosphate from glycerol: step 1/1. Inhibited by fructose 1,6-bisphosphate (FBP). Functionally, key enzyme in the regulation of glycerol uptake and metabolism. Catalyzes the phosphorylation of glycerol to yield sn-glycerol 3-phosphate. This chain is Glycerol kinase, found in Delftia acidovorans (strain DSM 14801 / SPH-1).